Here is a 427-residue protein sequence, read N- to C-terminus: MKLLTNANTLKGTIRVPGDKSISHRAIIFGSISQGVTRIVDVLRGEDVLSTIEAFKQMGVLIEDDGEIITIYGKGFAGLTQPNNLLDMGNSGTSMRLIAGVLAGQEFEVTMVGDNSLSKRPMDRIALPLSKMGARISGVTNRDLPPLKLQGTKKLKPIFYHLPVASAQVKSALIFAALQTKGESLIVEKEQTRNHTEDMIRQFGGHLDIKDKEIRLNGGQSLVGQDIRVPGDISSAAFWIVAGLIIPNSHIILENVGINETRTGILDVVSKMGGKIKLSSVDNQVKSATLTVDYSHLQATHISGAMIPRLIDELPIIALLATQAQGTTVIADAQELKVKETDRIQVVVESLKQMGADITATADGMIIRGNTPLHAASLDCHGDHRIGMMIAIAALLVKEGEVDLSGEEAINTSYPNFLEHLEGLVNA.

3-phosphoshikimate is bound by residues K20, S21, and R25. Position 20 (K20) interacts with phosphoenolpyruvate. Phosphoenolpyruvate-binding residues include G92 and R120. 3-phosphoshikimate contacts are provided by S166, Q168, D312, and K339. Residue Q168 coordinates phosphoenolpyruvate. D312 acts as the Proton acceptor in catalysis. Positions 343 and 385 each coordinate phosphoenolpyruvate.

It belongs to the EPSP synthase family. Monomer.

It is found in the cytoplasm. It carries out the reaction 3-phosphoshikimate + phosphoenolpyruvate = 5-O-(1-carboxyvinyl)-3-phosphoshikimate + phosphate. It functions in the pathway metabolic intermediate biosynthesis; chorismate biosynthesis; chorismate from D-erythrose 4-phosphate and phosphoenolpyruvate: step 6/7. Catalyzes the transfer of the enolpyruvyl moiety of phosphoenolpyruvate (PEP) to the 5-hydroxyl of shikimate-3-phosphate (S3P) to produce enolpyruvyl shikimate-3-phosphate and inorganic phosphate. The sequence is that of 3-phosphoshikimate 1-carboxyvinyltransferase from Streptococcus agalactiae serotype Ia (strain ATCC 27591 / A909 / CDC SS700).